We begin with the raw amino-acid sequence, 361 residues long: Prostaglandin D2 receptor (361 aa).

Residues 1–21 are Extracellular-facing; that stretch reads MRPLFYRCHNTTSVEKGNSAT. A glycan (N-linked (GlcNAc...) asparagine) is linked at Asn10. The helical transmembrane segment at 22–42 threads the bilayer; it reads MGGVLFSTGLVGNLLALGLLA. Residues 43–58 are Cytoplasmic-facing; that stretch reads RSGLGSCPPRSPRPPP. Residues 59-79 traverse the membrane as a helical segment; sequence SVFYVLVFGLTITDLLGKCLV. Topologically, residues 80–107 are extracellular; it reads SPFVLSAYAQNRSLRELVPGSDSSLCQA. Asn90 carries an N-linked (GlcNAc...) asparagine glycan. Residues Cys105 and Cys183 are joined by a disulfide bond. The chain crosses the membrane as a helical span at residues 108–128; the sequence is FAFIMSFFGLASTLQLLAMAL. Over 129–150 the chain is Cytoplasmic; the sequence is ECWLSLGHPFFHRRHLTPRRGA. The helical transmembrane segment at 151–171 threads the bilayer; it reads MVAPVVGAFCLAFCALPLVGF. Residues 172-195 are Extracellular-facing; the sequence is GKFVQYCPGTWCFFQMVHEERSLS. Residues 196–216 form a helical membrane-spanning segment; the sequence is VLSYSVLYASLMLLLVLAIVL. Residues 217–262 are Cytoplasmic-facing; it reads CNLSAMRNLYAMHLRLRGLLRPGSRERAEPGAGEREATPLHLEELD. Residues 263-283 form a helical membrane-spanning segment; that stretch reads HLLLLALMTVLFTMCSLPLIY. The Extracellular portion of the chain corresponds to 284 to 310; that stretch reads RAYYGAFKAVPEQNGTTEETEDLRALR. N-linked (GlcNAc...) asparagine glycosylation is present at Asn297. The chain crosses the membrane as a helical span at residues 311–331; sequence FLSVISIVDPWIFIIFRTSVF. The Cytoplasmic portion of the chain corresponds to 332-361; it reads RMFFRKIFIRPLIYRNWHSNSCQTNMESSL.

It belongs to the G-protein coupled receptor 1 family.

It localises to the cell membrane. In terms of biological role, receptor for prostaglandin D2 (PGD2). The activity of this receptor is mainly mediated by G(s) proteins that stimulate adenylate cyclase, resulting in an elevation of intracellular cAMP. A mobilization of calcium is also observed, but without formation of inositol 1,4,5-trisphosphate. Involved in PLA2G3-dependent maturation of mast cells. PLA2G3 is secreted by immature mast cells and acts on nearby fibroblasts upstream to PTDGS to synthesize PGD2, which in turn promotes mast cell maturation and degranulation via PTGDR. This chain is Prostaglandin D2 receptor (PTGDR), found in Bos taurus (Bovine).